The following is a 365-amino-acid chain: Histidinol-phosphate aminotransferase (365 aa).

The residue at position 227 (lysine 227) is an N6-(pyridoxal phosphate)lysine.

This sequence belongs to the class-II pyridoxal-phosphate-dependent aminotransferase family. Histidinol-phosphate aminotransferase subfamily. As to quaternary structure, homodimer. Requires pyridoxal 5'-phosphate as cofactor.

The catalysed reaction is L-histidinol phosphate + 2-oxoglutarate = 3-(imidazol-4-yl)-2-oxopropyl phosphate + L-glutamate. It functions in the pathway amino-acid biosynthesis; L-histidine biosynthesis; L-histidine from 5-phospho-alpha-D-ribose 1-diphosphate: step 7/9. The chain is Histidinol-phosphate aminotransferase from Polaromonas naphthalenivorans (strain CJ2).